Reading from the N-terminus, the 304-residue chain is Myelin basic protein (304 aa).

2 stretches are compositionally biased toward basic and acidic residues: residues 1–12 (MGNHAGKRELNA) and 22–32 (NRGESEKKRNL). The segment at 1-146 (MGNHAGKREL…QKRPSQRHGS (146 aa)) is disordered. The residue at position 2 (glycine 2) is an N-acetylalanine. Residues 51-65 (ANQNNGTSSQDTAVT) show a composition bias toward polar residues. Basic and acidic residues predominate over residues 95 to 113 (FSRDAPGREDNTFKDRPSE). Residue serine 96 is modified to Phosphoserine. Over residues 117 to 130 (LQTIQEDSAATSES) the composition is skewed to polar residues. 2 positions are modified to phosphoserine: serine 141 and serine 146. Tyrosine 148 is subject to Phosphotyrosine. A Phosphothreonine modification is found at threonine 151. Position 153 is a phosphoserine (serine 153). Position 154 is a phosphothreonine (threonine 154). Citrulline; in form C8 is present on residues arginine 159 and arginine 165. Arginine 167 carries the post-translational modification Citrulline. A Phosphothreonine modification is found at threonine 169. Serine 174 is subject to Phosphoserine. Omega-N-methylarginine is present on residues arginine 177 and arginine 183. Residues 179-222 (FGGDRGAPKRGSGKDSHHPARTAHYGSLPQKSHGRTQDENPVVH) are induces experimental autoimmune encephalomyelitis (EAE) 1. The interval 180 to 249 (GGDRGAPKRG…GRGLSLSRFS (70 aa)) is disordered. Residue serine 190 is modified to Phosphoserine. Arginine 199 carries the citrulline modification. Tyrosine 203 carries the post-translational modification Phosphotyrosine. Serine 210 carries the phosphoserine modification. Phosphothreonine occurs at positions 214 and 229. At arginine 231 the chain carries Citrulline. Threonine 232 carries the post-translational modification Phosphothreonine. Residue glutamine 237 is modified to Deamidated glutamine. The residue at position 241 (arginine 241) is an Omega-N-methylarginine; alternate. Arginine 241 carries the post-translational modification Symmetric dimethylarginine; alternate. The tract at residues 246 to 256 (SRFSWGAEGQR) is induces experimental autoimmune encephalomyelitis (EAE) 2. Serine 249 carries the phosphoserine modification. Citrulline; in form C8 occurs at positions 256 and 264. Glutamine 281 is modified (deamidated glutamine). Position 293 is a citrulline; in form C8 (arginine 293). At serine 295 the chain carries Phosphoserine. Arginine 296 is subject to Citrulline. The residue at position 299 (serine 299) is a Phosphoserine; by UHMK1. Residue arginine 303 is modified to Citrulline. Citrulline; in form C8 is present on arginine 304.

This sequence belongs to the myelin basic protein family. As to quaternary structure, homodimer. Isoform 3 exists as a homodimer. Several charge isomers of MBP; C1 (the most cationic, least modified, and most abundant form), C2, C3, C4, C5, C6, C7, C8-A and C8-B (the least cationic form); are produced as a result of optional PTM, such as phosphorylation, deamidation of glutamine or asparagine, arginine citrullination and methylation. C8-A and C8-B contain each two mass isoforms termed C8-A(H), C8-A(L), C8-B(H) and C8-B(L), (H) standing for higher and (L) for lower molecular weight. C3, C4 and C5 are phosphorylated. The ratio of methylated arginine residues decreases during aging, making the protein more cationic. In terms of processing, the N-terminal alanine is acetylated (isoform 3, isoform 4, isoform 5 and isoform 6). Post-translationally, arg-241 was found to be 6% monomethylated and 60% symmetrically dimethylated. Proteolytically cleaved in B cell lysosomes by cathepsin CTSG which degrades the major immunogenic MBP epitope and prevents the activation of MBP-specific autoreactive T cells. In terms of processing, phosphorylated by TAOK2, VRK2, MAPK11, MAPK12, MAPK14 and MINK1. MBP isoforms are found in both the central and the peripheral nervous system, whereas Golli-MBP isoforms are expressed in fetal thymus, spleen and spinal cord, as well as in cell lines derived from the immune system.

The protein resides in the myelin membrane. It is found in the nucleus. In terms of biological role, the classic group of MBP isoforms (isoform 4-isoform 14) are with PLP the most abundant protein components of the myelin membrane in the CNS. They have a role in both its formation and stabilization. The smaller isoforms might have an important role in remyelination of denuded axons in multiple sclerosis. The non-classic group of MBP isoforms (isoform 1-isoform 3/Golli-MBPs) may preferentially have a role in the early developing brain long before myelination, maybe as components of transcriptional complexes, and may also be involved in signaling pathways in T-cells and neural cells. Differential splicing events combined with optional post-translational modifications give a wide spectrum of isomers, with each of them potentially having a specialized function. Induces T-cell proliferation. The chain is Myelin basic protein (MBP) from Homo sapiens (Human).